Here is a 2894-residue protein sequence, read N- to C-terminus: Bifunctional DNA-directed RNA polymerase subunit beta-beta' (2894 aa).

Positions 1–1378 (MANFTKLKNR…DVNIYGDEQD (1378 aa)) are DNA-directed RNA polymerase subunit beta. The segment at 1385–2894 (PIAIKEDERP…QEEYEEDEEE (1510 aa)) is DNA-directed RNA polymerase subunit beta'. C1450, C1452, C1465, and C1468 together coordinate Zn(2+). Mg(2+) is bound by residues D1849, D1851, and D1853. Residues C2179, C2253, C2260, and C2263 each contribute to the Zn(2+) site.

It in the N-terminal section; belongs to the RNA polymerase beta chain family. The protein in the C-terminal section; belongs to the RNA polymerase beta' chain family. The RNAP catalytic core consists of 2 alpha, 1 beta/beta' and 1 omega subunit. When a sigma factor is associated with the core the holoenzyme is formed, which can initiate transcription. Requires Mg(2+) as cofactor. Zn(2+) is required as a cofactor.

The enzyme catalyses RNA(n) + a ribonucleoside 5'-triphosphate = RNA(n+1) + diphosphate. Functionally, DNA-dependent RNA polymerase catalyzes the transcription of DNA into RNA using the four ribonucleoside triphosphates as substrates. This is Bifunctional DNA-directed RNA polymerase subunit beta-beta' (rpoBC) from Helicobacter hepaticus (strain ATCC 51449 / 3B1).